The following is a 237-amino-acid chain: Flagellar L-ring protein (237 aa).

Positions 1 to 24 (MNRPGFPRFSVLIASLCGITLLSG) are cleaved as a signal peptide. A lipid anchor (N-palmitoyl cysteine) is attached at C25. C25 carries the S-diacylglycerol cysteine lipid modification.

Belongs to the FlgH family. The basal body constitutes a major portion of the flagellar organelle and consists of four rings (L,P,S, and M) mounted on a central rod.

It is found in the cell outer membrane. The protein localises to the bacterial flagellum basal body. Its function is as follows. Assembles around the rod to form the L-ring and probably protects the motor/basal body from shearing forces during rotation. This chain is Flagellar L-ring protein, found in Pseudomonas syringae pv. tomato (strain ATCC BAA-871 / DC3000).